We begin with the raw amino-acid sequence, 353 residues long: GTPase Obg (353 aa).

The region spanning 1-159 is the Obg domain; that stretch reads MKFLDEAKVY…RWIWLRLKLI (159 aa). In terms of domain architecture, OBG-type G spans 160-327; it reads ADAGLVGLPN…VLRALVAVIG (168 aa). GTP is bound by residues 166–173, 191–195, 212–215, 279–282, and 308–310; these read GLPNAGKS, FTTLH, DIPG, NKID, and SGV. Mg(2+)-binding residues include serine 173 and threonine 193.

It belongs to the TRAFAC class OBG-HflX-like GTPase superfamily. OBG GTPase family. Monomer. Mg(2+) is required as a cofactor.

The protein resides in the cytoplasm. An essential GTPase which binds GTP, GDP and possibly (p)ppGpp with moderate affinity, with high nucleotide exchange rates and a fairly low GTP hydrolysis rate. Plays a role in control of the cell cycle, stress response, ribosome biogenesis and in those bacteria that undergo differentiation, in morphogenesis control. The chain is GTPase Obg from Rhodopseudomonas palustris (strain TIE-1).